We begin with the raw amino-acid sequence, 121 residues long: Holo-[acyl-carrier-protein] synthase (121 aa).

Positions 8 and 55 each coordinate Mg(2+).

Belongs to the P-Pant transferase superfamily. AcpS family. Requires Mg(2+) as cofactor.

Its subcellular location is the cytoplasm. The catalysed reaction is apo-[ACP] + CoA = holo-[ACP] + adenosine 3',5'-bisphosphate + H(+). Functionally, transfers the 4'-phosphopantetheine moiety from coenzyme A to a Ser of acyl-carrier-protein. The polypeptide is Holo-[acyl-carrier-protein] synthase (Caldicellulosiruptor bescii (strain ATCC BAA-1888 / DSM 6725 / KCTC 15123 / Z-1320) (Anaerocellum thermophilum)).